Reading from the N-terminus, the 514-residue chain is Carboxysome shell carbonic anhydrase (514 aa).

Positions 1 to 27 (MAYRNRNLASQTQRPLAPTAPRRRPVV) are disordered. Position 175 (C175) interacts with Zn(2+). D177 (proton acceptor) is an active-site residue. Positions 243 and 254 each coordinate Zn(2+).

Belongs to the beta-class carbonic anhydrase family. CsoSCA subfamily. In terms of assembly, homodimer. Requires Zn(2+) as cofactor.

Its subcellular location is the carboxysome. It carries out the reaction hydrogencarbonate + H(+) = CO2 + H2O. In terms of biological role, reversible hydration of carbon dioxide. Essential for photosynthetic carbon dioxide fixation, supplies CO(2) to RuBisCO (ribulose bisphosphate carboxylase, cbbL-cbbS) in the carboxysome. The sequence is that of Carboxysome shell carbonic anhydrase from Prochlorococcus marinus (strain MIT 9313).